A 418-amino-acid polypeptide reads, in one-letter code: Dual-specificity RNA methyltransferase RlmN (418 aa).

Positions 1–21 are disordered; the sequence is MADTSLMPIPGQVDPVPAPRD. The active-site Proton acceptor is the glutamate 122. The Radical SAM core domain occupies 128–383; it reads DADRGTLCVS…APVRTPRGRD (256 aa). Cysteines 135 and 388 form a disulfide. Residues cysteine 142, cysteine 146, and cysteine 149 each contribute to the [4Fe-4S] cluster site. S-adenosyl-L-methionine is bound by residues 212 to 213, serine 244, 266 to 268, and asparagine 345; these read GE and SLH. Residue cysteine 388 is the S-methylcysteine intermediate of the active site. The disordered stretch occupies residues 393-418; it reads TAAQKKSRAERDREAAAEAEAAASQA. A compositionally biased stretch (basic and acidic residues) spans 399–408; it reads SRAERDREAA.

The protein belongs to the radical SAM superfamily. RlmN family. [4Fe-4S] cluster is required as a cofactor.

It localises to the cytoplasm. It catalyses the reaction adenosine(2503) in 23S rRNA + 2 reduced [2Fe-2S]-[ferredoxin] + 2 S-adenosyl-L-methionine = 2-methyladenosine(2503) in 23S rRNA + 5'-deoxyadenosine + L-methionine + 2 oxidized [2Fe-2S]-[ferredoxin] + S-adenosyl-L-homocysteine. The enzyme catalyses adenosine(37) in tRNA + 2 reduced [2Fe-2S]-[ferredoxin] + 2 S-adenosyl-L-methionine = 2-methyladenosine(37) in tRNA + 5'-deoxyadenosine + L-methionine + 2 oxidized [2Fe-2S]-[ferredoxin] + S-adenosyl-L-homocysteine. Functionally, specifically methylates position 2 of adenine 2503 in 23S rRNA and position 2 of adenine 37 in tRNAs. m2A2503 modification seems to play a crucial role in the proofreading step occurring at the peptidyl transferase center and thus would serve to optimize ribosomal fidelity. The polypeptide is Dual-specificity RNA methyltransferase RlmN (Erythrobacter litoralis (strain HTCC2594)).